Here is a 173-residue protein sequence, read N- to C-terminus: Ribosome maturation factor RimM (173 aa).

Residues 92 to 165 enclose the PRC barrel domain; sequence EGEFYHADLI…RVVIEMPGEI (74 aa).

This sequence belongs to the RimM family. As to quaternary structure, binds ribosomal protein uS19.

Its subcellular location is the cytoplasm. Its function is as follows. An accessory protein needed during the final step in the assembly of 30S ribosomal subunit, possibly for assembly of the head region. Essential for efficient processing of 16S rRNA. May be needed both before and after RbfA during the maturation of 16S rRNA. It has affinity for free ribosomal 30S subunits but not for 70S ribosomes. The chain is Ribosome maturation factor RimM from Nitrobacter hamburgensis (strain DSM 10229 / NCIMB 13809 / X14).